A 520-amino-acid polypeptide reads, in one-letter code: Transposase for insertion sequence element IS21-like (520 aa).

One can recognise an HTH IS21-type domain in the interval 13–78; that stretch reads YMWYKVRELQ…KYEEYVRGTL (66 aa). An Integrase catalytic domain is found at 136–312; that stretch reads LPETPYGEYA…VPSEEFAVEK (177 aa).

Belongs to the transposase IS21/IS408/IS1162 family.

Functionally, involved in the transposition of the insertion sequence. This is Transposase for insertion sequence element IS21-like (tnpA) from Bacteroides fragilis.